Reading from the N-terminus, the 456-residue chain is ATP-dependent protease ATPase subunit HslU (456 aa).

ATP contacts are provided by residues Val-18, 60–65, Asp-269, Glu-334, and Arg-406; that span reads GVGKTE.

This sequence belongs to the ClpX chaperone family. HslU subfamily. A double ring-shaped homohexamer of HslV is capped on each side by a ring-shaped HslU homohexamer. The assembly of the HslU/HslV complex is dependent on binding of ATP.

It localises to the cytoplasm. ATPase subunit of a proteasome-like degradation complex; this subunit has chaperone activity. The binding of ATP and its subsequent hydrolysis by HslU are essential for unfolding of protein substrates subsequently hydrolyzed by HslV. HslU recognizes the N-terminal part of its protein substrates and unfolds these before they are guided to HslV for hydrolysis. This is ATP-dependent protease ATPase subunit HslU from Desulfosudis oleivorans (strain DSM 6200 / JCM 39069 / Hxd3) (Desulfococcus oleovorans).